Consider the following 124-residue polypeptide: Fluoride-specific ion channel FluC (124 aa).

A run of 4 helical transmembrane segments spans residues 3–23, 36–56, 66–86, and 100–120; these read YLLVFLGGGLGAMFRHFINTV, TFFINVSGSLVMGLIAGYFAF, LFLMTGILGGYTTFSAFSLDA, and LYVLGSVALAIAGLFAGLALI. Glycine 74 and threonine 77 together coordinate Na(+).

Belongs to the fluoride channel Fluc/FEX (TC 1.A.43) family.

The protein resides in the cell inner membrane. It carries out the reaction fluoride(in) = fluoride(out). Na(+) is not transported, but it plays an essential structural role and its presence is essential for fluoride channel function. Fluoride-specific ion channel. Important for reducing fluoride concentration in the cell, thus reducing its toxicity. The protein is Fluoride-specific ion channel FluC of Rhodopseudomonas palustris (strain BisB5).